Consider the following 374-residue polypeptide: SKP1-interacting partner 15 (374 aa).

Residues 3-48 enclose the F-box domain; sequence SSPVNCLPPDSLHQIFSSLPIRDIMICRSVCKFFNQLLTSQCFIEI.

As to quaternary structure, part of a SCF (ASK-cullin-F-box) protein ligase complex. Interacts with SKP1A/ASK1, SKP1B/ASK2, ASK11 and ASK13.

It is found in the nucleus. It functions in the pathway protein modification; protein ubiquitination. Functionally, component of SCF(ASK-cullin-F-box) E3 ubiquitin ligase complexes, which may mediate the ubiquitination and subsequent proteasomal degradation of target proteins. This is SKP1-interacting partner 15 (SKIP15) from Arabidopsis thaliana (Mouse-ear cress).